The chain runs to 330 residues: 4-hydroxythreonine-4-phosphate dehydrogenase (330 aa).

Residues histidine 133 and threonine 134 each contribute to the substrate site. 3 residues coordinate a divalent metal cation: histidine 163, histidine 208, and histidine 263. Residues lysine 271, asparagine 280, and arginine 289 each coordinate substrate.

The protein belongs to the PdxA family. In terms of assembly, homodimer. The cofactor is Zn(2+). Requires Mg(2+) as cofactor. Co(2+) serves as cofactor.

The protein localises to the cytoplasm. The catalysed reaction is 4-(phosphooxy)-L-threonine + NAD(+) = 3-amino-2-oxopropyl phosphate + CO2 + NADH. Its pathway is cofactor biosynthesis; pyridoxine 5'-phosphate biosynthesis; pyridoxine 5'-phosphate from D-erythrose 4-phosphate: step 4/5. Catalyzes the NAD(P)-dependent oxidation of 4-(phosphooxy)-L-threonine (HTP) into 2-amino-3-oxo-4-(phosphooxy)butyric acid which spontaneously decarboxylates to form 3-amino-2-oxopropyl phosphate (AHAP). This chain is 4-hydroxythreonine-4-phosphate dehydrogenase, found in Azoarcus sp. (strain BH72).